The sequence spans 350 residues: MSEANLTECELAYQLTYHPFYMIAQFWSFFVSLLAMPSLIFFMVEKVFKLPFHGNLKFLLVSYFIGTFLFASIICFTFGYHFFVPFFVTSNCDLIINATLFKYGHMIALIFMTIPMILPTAFTVERFVALKMAHSYEHVRTLLGPVLVLVVIAIDSMFLYDIYGQEKFDKPFINFILVPATSALQFNSFLWYMLYLKITNFICNLILLFIHKILHQSSRYRRKNVSLSVKYEMQEISQSSRFTLIVTFTHLLFFGWYVSTILLIRTVGPDFFRGFINYTVMRGVYCATPTYNLVIVFIGFKALNHLNFKRNNKVQSTIQIKSTGQEGAENYDNAISNYWDSVYTMNKSKL.

At 1–21 (MSEANLTECELAYQLTYHPFY) the chain is on the extracellular side. N-linked (GlcNAc...) asparagine glycosylation occurs at Asn-5. Residues 22–42 (MIAQFWSFFVSLLAMPSLIFF) traverse the membrane as a helical segment. Residues 43–57 (MVEKVFKLPFHGNLK) lie on the Cytoplasmic side of the membrane. Residues 58–78 (FLLVSYFIGTFLFASIICFTF) traverse the membrane as a helical segment. The Extracellular segment spans residues 79–103 (GYHFFVPFFVTSNCDLIINATLFKY). N-linked (GlcNAc...) asparagine glycosylation is present at Asn-97. Residues 104–124 (GHMIALIFMTIPMILPTAFTV) form a helical membrane-spanning segment. Topologically, residues 125 to 141 (ERFVALKMAHSYEHVRT) are cytoplasmic. Residues 142-162 (LLGPVLVLVVIAIDSMFLYDI) traverse the membrane as a helical segment. Residues 163–189 (YGQEKFDKPFINFILVPATSALQFNSF) are Extracellular-facing. A helical membrane pass occupies residues 190–210 (LWYMLYLKITNFICNLILLFI). Residues 211-243 (HKILHQSSRYRRKNVSLSVKYEMQEISQSSRFT) are Cytoplasmic-facing. Residues 244–264 (LIVTFTHLLFFGWYVSTILLI) form a helical membrane-spanning segment. Residues 265–282 (RTVGPDFFRGFINYTVMR) are Extracellular-facing. Asn-277 carries N-linked (GlcNAc...) asparagine glycosylation. Residues 283 to 303 (GVYCATPTYNLVIVFIGFKAL) traverse the membrane as a helical segment. The Cytoplasmic segment spans residues 304–350 (NHLNFKRNNKVQSTIQIKSTGQEGAENYDNAISNYWDSVYTMNKSKL).

The protein belongs to the nematode receptor-like protein srb family. As to expression, expressed throughout the head.

Its subcellular location is the cell membrane. It localises to the perikaryon. The protein resides in the cell projection. It is found in the dendrite. Its function is as follows. G-protein coupled receptor. Plays a role in the navigational capacity of sperm and promotes the targeting of sperm derived from males to the fertilization site in the uterus of hermaphrodites. The polypeptide is Serpentine receptor class beta-12 (Caenorhabditis elegans).